We begin with the raw amino-acid sequence, 593 residues long: Cryptochrome-2 (593 aa).

A Photolyase/cryptochrome alpha/beta domain is found at 22-151 (ASSVHWFRKG…EVVTENSHTL (130 aa)). A Glycyl lysine isopeptide (Lys-Gly) (interchain with G-Cter in ubiquitin) cross-link involves residue Lys30. The residue at position 90 (Ser90) is a Phosphoserine. Glycyl lysine isopeptide (Lys-Gly) (interchain with G-Cter in ubiquitin) cross-links involve residues Lys126 and Lys242. Position 266 is a phosphoserine; by MAPK (Ser266). FAD is bound at residue Ser271. A Phosphoserine modification is found at Ser299. Gln308 provides a ligand contact to FAD. A Glycyl lysine isopeptide (Lys-Gly) (interchain with G-Cter in ubiquitin) cross-link involves residue Lys348. Residues His374 and 406–408 (DAD) each bind FAD. Positions 390–489 (WVSWESGVRV…IIGVDYPRPI (100 aa)) are required for inhibition of CLOCK-BMAL1-mediated transcription. Residues Lys475 and Lys504 each participate in a glycyl lysine isopeptide (Lys-Gly) (interchain with G-Cter in ubiquitin) cross-link. The interval 532 to 593 (PVAEPSSSQA…PTPELPSKDA (62 aa)) is disordered. The span at 537-548 (SSSQAGSMSSAG) shows a compositional bias: low complexity. A Phosphoserine; by GSK3-beta modification is found at Ser554. Residue Ser558 is modified to Phosphoserine; by DYRK1A and MAPK.

This sequence belongs to the DNA photolyase class-1 family. As to quaternary structure, component of the circadian core oscillator, which includes the CRY proteins, CLOCK or NPAS2, BMAL1 or BMAL2, CSNK1D and/or CSNK1E, TIMELESS, and the PER proteins. Interacts with TIMELESS. Interacts directly with PER1, PER2 and PER3; interaction with PER2 inhibits its ubiquitination and vice versa. Interacts with CLOCK-BMAL1. Interacts with CLOCK. Interacts with BMAL1. Interacts with NFIL3. Interacts with FBXL3. Interacts with FBXL21. FBXL3, PER2 and the cofactor FAD compete for overlapping binding sites. FBXL3 cannot bind CRY2 that interacts already with PER2 or that contains bound FAD. Interacts with PPP5C (via TPR repeats); the interaction down-regulates the PPP5C phosphatase activity on CSNK1E. Interacts with nuclear receptors AR and NR3C1/GR; the interaction is ligand dependent. Interacts with PRKDC and CIART. Interacts with ISCA1 (in vitro). Interacts with DDB1, USP7 and TARDBP. Interacts with HNF4A. Interacts with PPARA. Interacts with PPARD (via domain NR LBD) and NR1I2 (via domain NR LBD) in a ligand-dependent manner. Interacts with PPARG, NR1I3 and VDR in a ligand-dependent manner. FAD is required as a cofactor. It depends on (6R)-5,10-methylene-5,6,7,8-tetrahydrofolate as a cofactor. Post-translationally, phosphorylation on Ser-266 by MAPK is important for the inhibition of CLOCK-BMAL1-mediated transcriptional activity. Phosphorylation by CSKNE requires interaction with PER1 or PER2. Phosphorylated in a circadian manner at Ser-554 and Ser-558 in the suprachiasmatic nucleus (SCN) and liver. Phosphorylation at Ser-558 by DYRK1A promotes subsequent phosphorylation at Ser-554 by GSK3-beta: the two-step phosphorylation at the neighboring Ser residues leads to its proteasomal degradation. Ubiquitinated by the SCF(FBXL3) and SCF(FBXL21) complexes, regulating the balance between degradation and stabilization. The SCF(FBXL3) complex is mainly nuclear and mediates ubiquitination and subsequent degradation of CRY2. In contrast, cytoplasmic SCF(FBXL21) complex-mediated ubiquitination leads to stabilize CRY2 and counteract the activity of the SCF(FBXL3) complex. The SCF(FBXL3) and SCF(FBXL21) complexes probably mediate ubiquitination at different Lys residues. The SCF(FBXL3) complex recognizes and binds CRY2 phosphorylated at Ser-554 and Ser-558. Ubiquitination may be inhibited by PER2. Deubiquitinated by USP7. In terms of tissue distribution, expressed in all tissues examined including fetal brain, fibroblasts, heart, brain, placenta, lung, liver, skeletal muscle, kidney, pancreas, spleen, thymus, prostate, testis, ovary, small intestine, colon and leukocytes. Highest levels in heart and skeletal muscle.

It localises to the cytoplasm. The protein resides in the nucleus. KL001 (N-[3-(9H-carbazol-9-yl)-2-hydroxypropyl]-N-(2-furanylmethyl)-methanesulfonamide) binds to CRY1 and stabilizes it by inhibiting FBXL3- and ubiquitin-dependent degradation of CRY1 resulting in lengthening of the circadian periods. Its function is as follows. Transcriptional repressor which forms a core component of the circadian clock. The circadian clock, an internal time-keeping system, regulates various physiological processes through the generation of approximately 24 hour circadian rhythms in gene expression, which are translated into rhythms in metabolism and behavior. It is derived from the Latin roots 'circa' (about) and 'diem' (day) and acts as an important regulator of a wide array of physiological functions including metabolism, sleep, body temperature, blood pressure, endocrine, immune, cardiovascular, and renal function. Consists of two major components: the central clock, residing in the suprachiasmatic nucleus (SCN) of the brain, and the peripheral clocks that are present in nearly every tissue and organ system. Both the central and peripheral clocks can be reset by environmental cues, also known as Zeitgebers (German for 'timegivers'). The predominant Zeitgeber for the central clock is light, which is sensed by retina and signals directly to the SCN. The central clock entrains the peripheral clocks through neuronal and hormonal signals, body temperature and feeding-related cues, aligning all clocks with the external light/dark cycle. Circadian rhythms allow an organism to achieve temporal homeostasis with its environment at the molecular level by regulating gene expression to create a peak of protein expression once every 24 hours to control when a particular physiological process is most active with respect to the solar day. Transcription and translation of core clock components (CLOCK, NPAS2, BMAL1, BMAL2, PER1, PER2, PER3, CRY1 and CRY2) plays a critical role in rhythm generation, whereas delays imposed by post-translational modifications (PTMs) are important for determining the period (tau) of the rhythms (tau refers to the period of a rhythm and is the length, in time, of one complete cycle). A diurnal rhythm is synchronized with the day/night cycle, while the ultradian and infradian rhythms have a period shorter and longer than 24 hours, respectively. Disruptions in the circadian rhythms contribute to the pathology of cardiovascular diseases, cancer, metabolic syndromes and aging. A transcription/translation feedback loop (TTFL) forms the core of the molecular circadian clock mechanism. Transcription factors, CLOCK or NPAS2 and BMAL1 or BMAL2, form the positive limb of the feedback loop, act in the form of a heterodimer and activate the transcription of core clock genes and clock-controlled genes (involved in key metabolic processes), harboring E-box elements (5'-CACGTG-3') within their promoters. The core clock genes: PER1/2/3 and CRY1/2 which are transcriptional repressors form the negative limb of the feedback loop and interact with the CLOCK|NPAS2-BMAL1|BMAL2 heterodimer inhibiting its activity and thereby negatively regulating their own expression. This heterodimer also activates nuclear receptors NR1D1/2 and RORA/B/G, which form a second feedback loop and which activate and repress BMAL1 transcription, respectively. CRY1 and CRY2 have redundant functions but also differential and selective contributions at least in defining the pace of the SCN circadian clock and its circadian transcriptional outputs. Less potent transcriptional repressor in cerebellum and liver than CRY1, though less effective in lengthening the period of the SCN oscillator. Seems to play a critical role in tuning SCN circadian period by opposing the action of CRY1. With CRY1, dispensable for circadian rhythm generation but necessary for the development of intercellular networks for rhythm synchrony. May mediate circadian regulation of cAMP signaling and gluconeogenesis by blocking glucagon-mediated increases in intracellular cAMP concentrations and in CREB1 phosphorylation. Besides its role in the maintenance of the circadian clock, is also involved in the regulation of other processes. Plays a key role in glucose and lipid metabolism modulation, in part, through the transcriptional regulation of genes involved in these pathways, such as LEP or ACSL4. Represses glucocorticoid receptor NR3C1/GR-induced transcriptional activity by binding to glucocorticoid response elements (GREs). Represses the CLOCK-BMAL1 induced transcription of BHLHE40/DEC1. Represses the CLOCK-BMAL1 induced transcription of NAMPT. Represses PPARD and its target genes in the skeletal muscle and limits exercise capacity. Represses the transcriptional activity of NR1I2. This chain is Cryptochrome-2 (CRY2), found in Homo sapiens (Human).